The primary structure comprises 434 residues: Protein trichome birefringence-like 3 (434 aa).

A helical; Signal-anchor for type II membrane protein membrane pass occupies residues Ile15 to Thr35. Positions Gly166–Ser168 match the GDS motif motif. The DCXHWCLPGXXDXWN motif motif lies at Asp413–Asn427.

Belongs to the PC-esterase family. TBL subfamily.

It is found in the golgi apparatus membrane. In terms of biological role, involved in secondary cell wall cellulose deposition. Required for normal stem development. May act as a bridging protein that binds pectin and other cell wall polysaccharides. Probably involved in maintaining esterification of pectins. May be involved in the specific O-acetylation of cell wall polymers. This Arabidopsis thaliana (Mouse-ear cress) protein is Protein trichome birefringence-like 3 (TBL3).